A 273-amino-acid chain; its full sequence is HMP-PP phosphatase (273 aa).

D8 acts as the Nucleophile in catalysis. Residues D8, D10, and D212 each coordinate Mg(2+).

The protein belongs to the HAD-like hydrolase superfamily. Cof family. Requires Mg(2+) as cofactor.

It carries out the reaction 4-amino-2-methyl-5-(diphosphooxymethyl)pyrimidine + H2O = 4-amino-2-methyl-5-(phosphooxymethyl)pyrimidine + phosphate + H(+). Functionally, catalyzes the hydrolysis of 4-amino-2-methyl-5-hydroxymethylpyrimidine pyrophosphate (HMP-PP) to 4-amino-2-methyl-5-hydroxymethylpyrimidine phosphate (HMP-P). The protein is HMP-PP phosphatase of Yersinia pestis bv. Antiqua (strain Antiqua).